The following is a 425-amino-acid chain: Enolase (425 aa).

Residue Gln162 coordinates (2R)-2-phosphoglycerate. Glu204 functions as the Proton donor in the catalytic mechanism. Residues Asp241, Glu282, and Asp309 each coordinate Mg(2+). (2R)-2-phosphoglycerate is bound by residues Lys334, Arg363, Ser364, and Lys385. Catalysis depends on Lys334, which acts as the Proton acceptor.

This sequence belongs to the enolase family. Mg(2+) serves as cofactor.

The protein resides in the cytoplasm. It localises to the secreted. The protein localises to the cell surface. The enzyme catalyses (2R)-2-phosphoglycerate = phosphoenolpyruvate + H2O. It participates in carbohydrate degradation; glycolysis; pyruvate from D-glyceraldehyde 3-phosphate: step 4/5. Its function is as follows. Catalyzes the reversible conversion of 2-phosphoglycerate (2-PG) into phosphoenolpyruvate (PEP). It is essential for the degradation of carbohydrates via glycolysis. In Corynebacterium efficiens (strain DSM 44549 / YS-314 / AJ 12310 / JCM 11189 / NBRC 100395), this protein is Enolase.